A 140-amino-acid chain; its full sequence is Methylglyoxal synthase (140 aa).

The region spanning M1–L140 is the MGS-like domain. Residues H8, K12, T34–T37, and S54–G55 contribute to the substrate site. D60 (proton donor/acceptor) is an active-site residue. Position 87 (H87) interacts with substrate.

Belongs to the methylglyoxal synthase family.

It carries out the reaction dihydroxyacetone phosphate = methylglyoxal + phosphate. Catalyzes the formation of methylglyoxal from dihydroxyacetone phosphate. The polypeptide is Methylglyoxal synthase (Geobacillus sp. (strain WCH70)).